Consider the following 310-residue polypeptide: Probable manganese-dependent inorganic pyrophosphatase (310 aa).

The Mn(2+) site is built by H9, D13, D15, D76, H98, and D150.

This sequence belongs to the PPase class C family. It depends on Mn(2+) as a cofactor.

The protein resides in the cytoplasm. The enzyme catalyses diphosphate + H2O = 2 phosphate + H(+). In Streptococcus thermophilus (strain ATCC BAA-491 / LMD-9), this protein is Probable manganese-dependent inorganic pyrophosphatase.